The primary structure comprises 168 residues: uncharacterized protein (168 aa).

The 166-residue stretch at 1–166 folds into the PfpI endopeptidase domain; that stretch reads MRVLILAENE…FCGELIKILK (166 aa).

The protein belongs to the peptidase C56 family.

This is an uncharacterized protein from Archaeoglobus fulgidus (strain ATCC 49558 / DSM 4304 / JCM 9628 / NBRC 100126 / VC-16).